The following is a 529-amino-acid chain: [Pyruvate dehydrogenase [acetyl-transferring]]-phosphatase 2, mitochondrial (529 aa).

A mitochondrion-targeting transit peptide spans 1 to 66 (MSSTVSYWIL…FTLCKAYRHT (66 aa)). In terms of domain architecture, PPM-type phosphatase spans 106–517 (VLRFESNQLA…DDITVTVVYF (412 aa)). Residues Asp-141, Gly-142, Asp-412, and Asp-508 each coordinate Mn(2+).

The protein belongs to the PP2C family. It depends on Mg(2+) as a cofactor.

It is found in the mitochondrion. The enzyme catalyses O-phospho-L-seryl-[pyruvate dehydrogenase E1 alpha subunit] + H2O = L-seryl-[pyruvate dehydrogenase E1 alpha subunit] + phosphate. Functionally, mitochondrial enzyme that catalyzes the dephosphorylation and concomitant reactivation of the alpha subunit of the E1 component of the pyruvate dehydrogenase complex (PDC), thereby stimulating the conversion of pyruvate into acetyl-CoA. Acts as a crucial regulator of T cell metabolism and function, with a particular focus on T-helper Th17. In Homo sapiens (Human), this protein is [Pyruvate dehydrogenase [acetyl-transferring]]-phosphatase 2, mitochondrial.